Here is a 457-residue protein sequence, read N- to C-terminus: Bifunctional protein GlmU (457 aa).

The interval 1-230 is pyrophosphorylase; it reads MSKRYAVVLA…FEESLGVNDR (230 aa). Residues 9 to 12, lysine 23, glutamine 73, and 78 to 79 contribute to the UDP-N-acetyl-alpha-D-glucosamine site; these read LAAG and GT. Aspartate 103 contributes to the Mg(2+) binding site. 4 residues coordinate UDP-N-acetyl-alpha-D-glucosamine: glycine 140, glutamate 155, asparagine 170, and asparagine 228. A Mg(2+)-binding site is contributed by asparagine 228. The segment at 231-251 is linker; sequence IALAEASKLMQRRINENHMRN. The tract at residues 252–457 is N-acetyltransferase; that stretch reads GVTLVNPENT…GYAKHLNHGK (206 aa). UDP-N-acetyl-alpha-D-glucosamine-binding residues include arginine 333 and lysine 351. The active-site Proton acceptor is histidine 363. The UDP-N-acetyl-alpha-D-glucosamine site is built by tyrosine 366 and asparagine 377. Acetyl-CoA is bound by residues 386-387, alanine 423, and arginine 440; that span reads NY.

In the N-terminal section; belongs to the N-acetylglucosamine-1-phosphate uridyltransferase family. The protein in the C-terminal section; belongs to the transferase hexapeptide repeat family. In terms of assembly, homotrimer. Mg(2+) serves as cofactor.

It localises to the cytoplasm. It catalyses the reaction alpha-D-glucosamine 1-phosphate + acetyl-CoA = N-acetyl-alpha-D-glucosamine 1-phosphate + CoA + H(+). The catalysed reaction is N-acetyl-alpha-D-glucosamine 1-phosphate + UTP + H(+) = UDP-N-acetyl-alpha-D-glucosamine + diphosphate. The protein operates within nucleotide-sugar biosynthesis; UDP-N-acetyl-alpha-D-glucosamine biosynthesis; N-acetyl-alpha-D-glucosamine 1-phosphate from alpha-D-glucosamine 6-phosphate (route II): step 2/2. Its pathway is nucleotide-sugar biosynthesis; UDP-N-acetyl-alpha-D-glucosamine biosynthesis; UDP-N-acetyl-alpha-D-glucosamine from N-acetyl-alpha-D-glucosamine 1-phosphate: step 1/1. It functions in the pathway bacterial outer membrane biogenesis; LPS lipid A biosynthesis. Functionally, catalyzes the last two sequential reactions in the de novo biosynthetic pathway for UDP-N-acetylglucosamine (UDP-GlcNAc). The C-terminal domain catalyzes the transfer of acetyl group from acetyl coenzyme A to glucosamine-1-phosphate (GlcN-1-P) to produce N-acetylglucosamine-1-phosphate (GlcNAc-1-P), which is converted into UDP-GlcNAc by the transfer of uridine 5-monophosphate (from uridine 5-triphosphate), a reaction catalyzed by the N-terminal domain. The chain is Bifunctional protein GlmU from Listeria innocua serovar 6a (strain ATCC BAA-680 / CLIP 11262).